Reading from the N-terminus, the 285-residue chain is Lectin (285 aa).

The N-terminal stretch at 1–32 (MATSKLKTQNVVVSLSLTLTLVLVLLTSKANS) is a signal peptide. Asn-107 carries an N-linked (GlcNAc...) asparagine glycan.

It belongs to the leguminous lectin family. In terms of assembly, homotetramer.

Binds GalNAc and galactose. The sequence is that of Lectin (LE1) from Glycine max (Soybean).